Reading from the N-terminus, the 355-residue chain is Heme A synthase (355 aa).

Transmembrane regions (helical) follow at residues 21 to 41, 85 to 102, 136 to 156, 173 to 193, 208 to 228, 264 to 284, 299 to 319, and 322 to 342; these read LARW…VGGI, INLG…FWEW, LFAL…MVAS, LLTA…LGAL, AIGV…VAGL, FLIH…LLLL, ALVI…VSGV, and WVAV…AAAL. Heme is bound at residue His-270. His-327 is a binding site for heme.

The protein belongs to the COX15/CtaA family. Type 2 subfamily. In terms of assembly, interacts with CtaB. The cofactor is heme b.

Its subcellular location is the cell membrane. It catalyses the reaction Fe(II)-heme o + 2 A + H2O = Fe(II)-heme a + 2 AH2. It functions in the pathway porphyrin-containing compound metabolism; heme A biosynthesis; heme A from heme O: step 1/1. Its function is as follows. Catalyzes the conversion of heme O to heme A by two successive hydroxylations of the methyl group at C8. The first hydroxylation forms heme I, the second hydroxylation results in an unstable dihydroxymethyl group, which spontaneously dehydrates, resulting in the formyl group of heme A. This chain is Heme A synthase, found in Sphingopyxis alaskensis (strain DSM 13593 / LMG 18877 / RB2256) (Sphingomonas alaskensis).